The primary structure comprises 461 residues: Chromosomal replication initiator protein DnaA (461 aa).

Positions Met1–Ala90 are domain I, interacts with DnaA modulators. The domain II stretch occupies residues Pro91–Ser124. The segment at Asn125–Ala341 is domain III, AAA+ region. ATP contacts are provided by Gly169, Gly171, Lys172, and Thr173. The segment at Asn342 to Ser461 is domain IV, binds dsDNA.

Belongs to the DnaA family. In terms of assembly, oligomerizes as a right-handed, spiral filament on DNA at oriC.

It is found in the cytoplasm. In terms of biological role, plays an essential role in the initiation and regulation of chromosomal replication. ATP-DnaA binds to the origin of replication (oriC) to initiate formation of the DNA replication initiation complex once per cell cycle. Binds the DnaA box (a 9 base pair repeat at the origin) and separates the double-stranded (ds)DNA. Forms a right-handed helical filament on oriC DNA; dsDNA binds to the exterior of the filament while single-stranded (ss)DNA is stabiized in the filament's interior. The ATP-DnaA-oriC complex binds and stabilizes one strand of the AT-rich DNA unwinding element (DUE), permitting loading of DNA polymerase. After initiation quickly degrades to an ADP-DnaA complex that is not apt for DNA replication. Binds acidic phospholipids. The chain is Chromosomal replication initiator protein DnaA from Shewanella frigidimarina (strain NCIMB 400).